The sequence spans 160 residues: Protein-export protein SecB (160 aa).

This sequence belongs to the SecB family. As to quaternary structure, homotetramer, a dimer of dimers. One homotetramer interacts with 1 SecA dimer.

The protein localises to the cytoplasm. Functionally, one of the proteins required for the normal export of preproteins out of the cell cytoplasm. It is a molecular chaperone that binds to a subset of precursor proteins, maintaining them in a translocation-competent state. It also specifically binds to its receptor SecA. This Orientia tsutsugamushi (strain Boryong) (Rickettsia tsutsugamushi) protein is Protein-export protein SecB.